Here is a 553-residue protein sequence, read N- to C-terminus: Zinc finger protein 324A (553 aa).

The KRAB domain occupies Met-1 to Thr-72. The Nuclear localization signal motif lies at Pro-130–Lys-135. Positions Gly-186 to His-221 are disordered. 9 consecutive C2H2-type zinc fingers follow at residues Phe-257–His-279, Tyr-285–His-307, Tyr-313–His-335, Phe-341–His-363, Tyr-369–His-391, Phe-397–His-419, Phe-425–His-447, Phe-453–His-475, and Phe-481–His-503. The disordered stretch occupies residues Ile-502 to Val-553.

Belongs to the krueppel C2H2-type zinc-finger protein family. Expressed at high levels in the spleen, thymus, and PBMC, at low levels in the prostate, ovary, small intestine, colon (mucosal lining), placenta, lung, and pancreas, and very weakly expressed in the liver and kidney.

The protein localises to the nucleus. Functionally, may be involved in transcriptional regulation. May be involved in regulation of cell proliferation. The sequence is that of Zinc finger protein 324A (ZNF324) from Homo sapiens (Human).